The primary structure comprises 359 residues: Ornithine cyclodeaminase (359 aa).

The L-ornithine site is built by Arg53 and Lys77. NAD(+) contacts are provided by residues Thr92, Arg120, 147-148 (AQ), Asp169, Thr209, 232-235 (VGGD), Lys239, and Ser300. Residue Arg120 participates in L-ornithine binding. Asp235 contributes to the L-ornithine binding site. Asp235 functions as the Proton donor/acceptor in the catalytic mechanism. Val301 is a binding site for L-ornithine.

The protein belongs to the ornithine cyclodeaminase/mu-crystallin family. It depends on NAD(+) as a cofactor.

It catalyses the reaction L-ornithine = L-proline + NH4(+). It functions in the pathway amino-acid biosynthesis; L-proline biosynthesis; L-proline from L-ornithine: step 1/1. In terms of biological role, catalyzes the conversion of L-ornithine into L-proline with release of ammonia. The sequence is that of Ornithine cyclodeaminase from Brucella abortus biovar 1 (strain 9-941).